The chain runs to 88 residues: Small ribosomal subunit protein uS17 (88 aa).

Belongs to the universal ribosomal protein uS17 family. As to quaternary structure, part of the 30S ribosomal subunit.

One of the primary rRNA binding proteins, it binds specifically to the 5'-end of 16S ribosomal RNA. This is Small ribosomal subunit protein uS17 from Prochlorococcus marinus (strain NATL1A).